A 396-amino-acid polypeptide reads, in one-letter code: Putative F-box protein At4g22660 (396 aa).

The F-box domain occupies 7 to 58 (PNTWSDLPLDLLNLVFKRLSFANFRQAKSVCSSWYSASKQSVPKNQIPWLML).

This is Putative F-box protein At4g22660 from Arabidopsis thaliana (Mouse-ear cress).